The sequence spans 373 residues: Alanine racemase (373 aa).

Residue Lys-35 is the Proton acceptor; specific for D-alanine of the active site. Lys-35 is modified (N6-(pyridoxal phosphate)lysine). Residue Arg-130 participates in substrate binding. Tyr-253 functions as the Proton acceptor; specific for L-alanine in the catalytic mechanism. Met-305 serves as a coordination point for substrate.

The protein belongs to the alanine racemase family. It depends on pyridoxal 5'-phosphate as a cofactor.

It catalyses the reaction L-alanine = D-alanine. Its pathway is amino-acid biosynthesis; D-alanine biosynthesis; D-alanine from L-alanine: step 1/1. Catalyzes the interconversion of L-alanine and D-alanine. May also act on other amino acids. The chain is Alanine racemase (alr) from Cupriavidus necator (strain ATCC 17699 / DSM 428 / KCTC 22496 / NCIMB 10442 / H16 / Stanier 337) (Ralstonia eutropha).